The following is a 190-amino-acid chain: Guanylate kinase (190 aa).

The Guanylate kinase-like domain occupies 3-185; it reads NYIFIVSAPS…SLEQFCKYFE (183 aa). 10-17 is a binding site for ATP; sequence APSGAGKS.

Belongs to the guanylate kinase family.

It localises to the cytoplasm. It catalyses the reaction GMP + ATP = GDP + ADP. Essential for recycling GMP and indirectly, cGMP. This chain is Guanylate kinase, found in Francisella tularensis subsp. tularensis (strain FSC 198).